Here is a 323-residue protein sequence, read N- to C-terminus: Ankyrin repeat and SOCS box protein 11 (323 aa).

6 ANK repeats span residues 64 to 93 (ADRS…NVNL), 97 to 126 (NRVS…HVNG), 130 to 159 (HGAT…KAQF), 162 to 191 (HLAS…NIDH), 195 to 224 (QLGT…SVDH), and 227 to 256 (WLDT…NLKR). Residues 274 to 323 (VEQALLLCEGPPALSQLCRLCVRKCLGRACHQAIHKLHLPEPLERFLLYQ) form the SOCS box domain.

It belongs to the ankyrin SOCS box (ASB) family. As to quaternary structure, substrate-recognition component of the ECS(ASB11) complex, composed of ASB11, CUL5, ELOB, ELOC and RNF7/RBX2.

The protein localises to the endoplasmic reticulum. The protein operates within protein modification; protein ubiquitination. Functionally, substrate-recognition component of a cullin-5-RING E3 ubiquitin-protein ligase complex (ECS complex, also named CRL5 complex), which mediates the ubiquitination and subsequent proteasomal degradation of target proteins, such as BIK, DIRAS2 and RPN1. The ECS(ASB11) complex acts as a regulator of the endoplasmic reticulum unfolded protein response by mediating ubiquitination and degradation of BIK. The protein is Ankyrin repeat and SOCS box protein 11 (ASB11) of Pongo abelii (Sumatran orangutan).